The chain runs to 50 residues: FLGTINLSLCEQERDADEEERRDEPDESDVEVEKRFLPIVTNLLSGLLGK.

The N-terminal stretch at 1–10 (FLGTINLSLC) is a signal peptide. Positions 11–35 (EQERDADEEERRDEPDESDVEVEKR) are excised as a propeptide. Residues 12–31 (QERDADEEERRDEPDESDVE) are disordered. Positions 14–30 (RDADEEERRDEPDESDV) are enriched in acidic residues. Position 48 is a leucine amide (Leu-48).

This sequence belongs to the frog skin active peptide (FSAP) family. Temporin subfamily. In terms of tissue distribution, expressed by the skin glands.

The protein resides in the secreted. Amphipathic alpha-helical peptide with no antimicrobial activity. Does not display anti-leishmania activity. Does not show hemolytic activity (LC(50)&gt;116 uM). The polypeptide is Temporin-SHb (Pelophylax saharicus (Sahara frog)).